The following is a 368-amino-acid chain: MNKTITALAIMMASFAANASVLPETPVPFKSGTGAIDNDTVYIGLGSAGTAWYKLDTQAKDKKWTALAAFPGGPRDQATSAFIDGNLYVFGGIGKNSEGLTQVFNDVHKYNPKTNSWVKLMSHAPMGMAGHVTFVHNGKAYVTGGVNQNIFNGYFEDLNEAGKDSTAIDKINAHYFDKKAEDYFFNKFLLSFDPSTQQWSYAGESPWYGTAGAAVVNKGDKTWLINGEAKPGLRTDAVFELDFTGNNLKWNKLAPVSSPDGVAGGFAGISNDSLIFAGGAGFKGSRENYQNGKNYAHEGLKKSYSTDIHLWHNGKWDKSGELSQGRAYGVSLPWNNSLLIIGGETAGGKAVTDSVLITVKDNKVTVQN.

An N-terminal signal peptide occupies residues 1 to 19 (MNKTITALAIMMASFAANA). Kelch repeat units follow at residues 40 to 84 (TVYI…AFID), 86 to 137 (NLYV…FVHN), 139 to 173 (KAYV…KINA), 174 to 219 (HYFD…VNKG), 222 to 265 (TWLI…VAGG), 287 to 336 (ENYQ…PWNN), and 338 to 367 (LLII…VTVQ). Catalysis depends on Glu-228, which acts as the Proton acceptor.

In terms of assembly, homodimer.

The protein resides in the periplasm. The enzyme catalyses N-acetyl-alpha-neuraminate = N-acetyl-beta-neuraminate. Functionally, converts alpha-N-acetylneuranimic acid (Neu5Ac) to the beta-anomer, accelerating the equilibrium between the alpha- and beta-anomers. Probably facilitates sialidase-negative bacteria to compete successfully for limited amounts of extracellular Neu5Ac, which is likely taken up in the beta-anomer. In addition, the rapid removal of sialic acid from solution might be advantageous to the bacterium to damp down host responses. Forms linear aceneuramate during interconversion of Neu5Ac anomers. This is N-acetylneuraminate epimerase (nanM) from Escherichia coli (strain K12).